A 625-amino-acid polypeptide reads, in one-letter code: ATP-binding cassette sub-family F member 2 (625 aa).

Residues 1–54 (MPSDLAKKKAAKKKEAAKARQRPRKGHEENGDAITEPQVAEERNEEANGRETTE) form a disordered region. The span at 40–54 (AEERNEEANGRETTE) shows a compositional bias: basic and acidic residues. ABC transporter domains lie at 88 to 327 (AHII…ENQM) and 398 to 615 (IMVQ…VGEE). 120–127 (GLNGIGKS) serves as a coordination point for ATP. Threonine 220 bears the Phosphothreonine mark. Residue lysine 306 is modified to N6-acetyllysine. 432–439 (GPNGAGKS) is an ATP binding site. Phosphoserine is present on serine 514.

This sequence belongs to the ABC transporter superfamily. ABCF family. EF3 subfamily.

This Bos taurus (Bovine) protein is ATP-binding cassette sub-family F member 2 (ABCF2).